We begin with the raw amino-acid sequence, 255 residues long: Triosephosphate isomerase (255 aa).

Residue 9–11 (NWK) coordinates substrate. His95 (electrophile) is an active-site residue. Glu167 functions as the Proton acceptor in the catalytic mechanism. Residues Gly173, Ser212, and 233–234 (GG) contribute to the substrate site.

The protein belongs to the triosephosphate isomerase family. In terms of assembly, homodimer.

The protein localises to the cytoplasm. The enzyme catalyses D-glyceraldehyde 3-phosphate = dihydroxyacetone phosphate. It functions in the pathway carbohydrate biosynthesis; gluconeogenesis. Its pathway is carbohydrate degradation; glycolysis; D-glyceraldehyde 3-phosphate from glycerone phosphate: step 1/1. Involved in the gluconeogenesis. Catalyzes stereospecifically the conversion of dihydroxyacetone phosphate (DHAP) to D-glyceraldehyde-3-phosphate (G3P). This Erwinia tasmaniensis (strain DSM 17950 / CFBP 7177 / CIP 109463 / NCPPB 4357 / Et1/99) protein is Triosephosphate isomerase.